The primary structure comprises 200 residues: Small ribosomal subunit protein uS4 (200 aa).

The tract at residues 22-42 is disordered; that stretch reads TGKELEKRPYAPGPHGPNQRK. One can recognise an S4 RNA-binding domain in the interval 92–152; it reads ARLDNLVYRM…EKSNSLVVVK (61 aa).

The protein belongs to the universal ribosomal protein uS4 family. As to quaternary structure, part of the 30S ribosomal subunit. Contacts protein S5. The interaction surface between S4 and S5 is involved in control of translational fidelity.

Its function is as follows. One of the primary rRNA binding proteins, it binds directly to 16S rRNA where it nucleates assembly of the body of the 30S subunit. Functionally, with S5 and S12 plays an important role in translational accuracy. The polypeptide is Small ribosomal subunit protein uS4 (Bacillus mycoides (strain KBAB4) (Bacillus weihenstephanensis)).